Consider the following 109-residue polypeptide: Phosphoribosyl-ATP pyrophosphatase (109 aa).

The protein belongs to the PRA-PH family.

The protein resides in the cytoplasm. It catalyses the reaction 1-(5-phospho-beta-D-ribosyl)-ATP + H2O = 1-(5-phospho-beta-D-ribosyl)-5'-AMP + diphosphate + H(+). It participates in amino-acid biosynthesis; L-histidine biosynthesis; L-histidine from 5-phospho-alpha-D-ribose 1-diphosphate: step 2/9. The polypeptide is Phosphoribosyl-ATP pyrophosphatase (Alkalilimnicola ehrlichii (strain ATCC BAA-1101 / DSM 17681 / MLHE-1)).